A 465-amino-acid polypeptide reads, in one-letter code: Poly(A) polymerase I (465 aa).

Residues Asp80, Asp82, and Asp162 contribute to the active site. Positions 430–465 (APPEQKGMLNELDDDPAPRRRRSRPRKRAPRREGTV) are disordered. The segment covering 448–459 (RRRRSRPRKRAP) has biased composition (basic residues).

It belongs to the tRNA nucleotidyltransferase/poly(A) polymerase family.

The catalysed reaction is RNA(n) + ATP = RNA(n)-3'-adenine ribonucleotide + diphosphate. Adds poly(A) tail to the 3' end of many RNAs, which usually targets these RNAs for decay. Plays a significant role in the global control of gene expression, through influencing the rate of transcript degradation, and in the general RNA quality control. The polypeptide is Poly(A) polymerase I (Salmonella typhi).